The chain runs to 412 residues: MEFTTSSRFSKEEEDEEQDEAGRREIPFMTATAEAAPAPTSSSSSPAHHAASASASASASGSSTPFRSDDGAGASGSGGGGGGGGEAEVVEKEHMFDKVVTPSDVGKLNRLVIPKQYAEKYFPLDAAANEKGLLLNFEDRAGKPWRFRYSYWNSSQSYVMTKGWSRFVKEKRLDAGDTVSFSRGIGDEAARHRLFIDWKRRADTRDPLRLPRGLPLPMPLTSHYAPWGIGGGGGFFVQPSPPATLYEHRLRQGLDFRAFNPAAAMGRQVLLFGSARIPPQAPLLARAPSPLHHHYTLQPSGDGVRAAGSPVVLDSVPVIESPTTAAKRVRLFGVNLDNPHAGGGGGAAAGESSNHGNALSLQTPAWMRRDPTLRLLELPPHHHHGAESSAASSPSSSSSSKRDAHSALDLDL.

A disordered region spans residues 1–87; that stretch reads MEFTTSSRFS…GGGGGGGGEA (87 aa). Low complexity predominate over residues 30-65; it reads TATAEAAPAPTSSSSSPAHHAASASASASASGSSTP. The span at 73–86 shows a compositional bias: gly residues; that stretch reads GASGSGGGGGGGGE. The segment at residues 96–200 is a DNA-binding region (TF-B3); the sequence is FDKVVTPSDV…RHRLFIDWKR (105 aa). Residues 374-412 are disordered; it reads RLLELPPHHHHGAESSAASSPSSSSSSKRDAHSALDLDL. Residues 387–399 are compositionally biased toward low complexity; sequence ESSAASSPSSSSS. Basic and acidic residues predominate over residues 400–412; sequence SKRDAHSALDLDL.

It localises to the nucleus. This chain is B3 domain-containing protein Os02g0683500, found in Oryza sativa subsp. japonica (Rice).